A 765-amino-acid chain; its full sequence is Protein transport protein sec23-2 (765 aa).

Zn(2+)-binding residues include cysteine 56, cysteine 60, cysteine 79, and cysteine 82. Residues serine 565 and serine 566 each carry the phosphoserine modification.

This sequence belongs to the SEC23/SEC24 family. SEC23 subfamily. As to quaternary structure, the COPII coat is composed of at least 5 proteins: the sec23/24 complex, the sec13/31 complex, and the protein sar1.

Its subcellular location is the cytoplasm. It localises to the cytoplasmic vesicle. It is found in the COPII-coated vesicle membrane. The protein resides in the endoplasmic reticulum membrane. The protein localises to the golgi apparatus membrane. In terms of biological role, component of the coat protein complex II (COPII) which promotes the formation of transport vesicles from the endoplasmic reticulum (ER). The coat has two main functions, the physical deformation of the endoplasmic reticulum membrane into vesicles and the selection of cargo molecules. The chain is Protein transport protein sec23-2 (sec232) from Schizosaccharomyces pombe (strain 972 / ATCC 24843) (Fission yeast).